A 207-amino-acid polypeptide reads, in one-letter code: Large ribosomal subunit protein uL4 (207 aa).

Residues 44-78 (QRQGTHDVKNRSEVRGGGRKPWRQKGTGRARQGSI) form a disordered region. Positions 47–59 (GTHDVKNRSEVRG) are enriched in basic and acidic residues. Basic residues predominate over residues 60-71 (GGRKPWRQKGTG).

It belongs to the universal ribosomal protein uL4 family. As to quaternary structure, part of the 50S ribosomal subunit.

One of the primary rRNA binding proteins, this protein initially binds near the 5'-end of the 23S rRNA. It is important during the early stages of 50S assembly. It makes multiple contacts with different domains of the 23S rRNA in the assembled 50S subunit and ribosome. Functionally, forms part of the polypeptide exit tunnel. The polypeptide is Large ribosomal subunit protein uL4 (Brevibacillus brevis (strain 47 / JCM 6285 / NBRC 100599)).